The following is a 454-amino-acid chain: Putative serine/threonine-protein phosphatase C27B7.6 (454 aa).

Mn(2+) contacts are provided by D65, H67, D93, and N125. The active-site Proton donor is H126. Mn(2+) is bound by residues H174 and H252. The interval 414–454 (RKKLGMTTSTTPPPPRTPSPDAPLAQSPPIPRSPPSSTENA) is disordered. Over residues 424–447 (TPPPPRTPSPDAPLAQSPPIPRSP) the composition is skewed to pro residues.

The protein belongs to the PPP phosphatase family. PP-1 subfamily. It depends on Mn(2+) as a cofactor.

It carries out the reaction O-phospho-L-seryl-[protein] + H2O = L-seryl-[protein] + phosphate. It catalyses the reaction O-phospho-L-threonyl-[protein] + H2O = L-threonyl-[protein] + phosphate. This Caenorhabditis elegans protein is Putative serine/threonine-protein phosphatase C27B7.6.